The chain runs to 175 residues: Calcineurin subunit B (175 aa).

4 EF-hand domains span residues 21-56 (DEIE…SANP), 60-88 (RIME…FSGR), 90-125 (SKDE…MVGS), and 131-166 (QLQQ…TEVA). Ca(2+)-binding residues include Asp34, Asp36, Ser38, Ser40, Glu45, Asp66, Asp68, Ser70, Asp72, Glu77, Asp103, Asp105, Asp107, Glu114, Asp144, Asp146, Asp148, Gln150, and Glu155.

This sequence belongs to the calcineurin regulatory subunit family. As to quaternary structure, composed of a catalytic subunit (A) and a regulatory subunit (B).

In terms of biological role, regulatory subunit of calcineurin, a calcium-dependent, calmodulin stimulated protein phosphatase. Confers calcium sensitivity. The sequence is that of Calcineurin subunit B (CNB1) from Candida glabrata (strain ATCC 2001 / BCRC 20586 / JCM 3761 / NBRC 0622 / NRRL Y-65 / CBS 138) (Yeast).